A 1266-amino-acid chain; its full sequence is MAAVGPASPPPPPLWMHRDLSRAAAEELLARAGRDGSFLVRDSESVSGAYALCVLFQKHVHTYRILPDEENFLAVQTSQGVQPKRFKTLPELIQLYLQPSQGLVTTLLYPVEREETTEDRDYSDGEDEKPPLPPRTASTSSMTGSALVSTDTPPENVTAANGLSTISHEYLKGNYALDLEAVKQGANSLPHLNKTLLSSCKRLHGEVDKVLCGLEILSKVFDQQSASMVSRMIQQSMSQGGDQELEHLVTKLAILKDLLSSIEKKALKALQDMSSSTPAISPLLSIRNKVIPVQTFEVKLDVYLADLTKIGKSQKYSLSVDVEGGKLVVMKKMKDAQEDWNTFTHDKIRQLIKSQRVQNKLGIVFEKEKDKSQRKDFIFASAKKREAFCQLLQLMKNKHSNQDEPDMISIFIGTWNMGSVPAPKPLGSWILSRGLGKTLDEMAVTIPHDIYVFGTQENSVCDKEWVETLRCSLKEYTDMEYKPIAVQTLWNIKIVVLVKAEHENRISHVGMSSVKTGIANTLGNKGAVGVSFMFNGTSFGFVNCHLTSGNEKIHRRNQNYLDILRQLSLGDKQLNSFDISLRFTHLFWFGDLNYRLDMDIQEILNYINRKEFDPLLKVDQLNLEREKNKIFLRFAEEEISYPPTYRYERGSRDTYVWQKQKATGMRTNVPSWCDRILWKSYPETHIVCNSYGCTDDIVTSDHSPVFGTFEVGVTSQFVSKKGLPKSSEQAYIEFENIEAIVKTASRTKFFIEFYSTCLEEFKKSYENDTQSSDNVNFLRVGWSSKQLTTLKPILSDIEYLQDQHLLLTVKSLDGYESYGECVLALKSMIGSTAQQFHTYLSHRGEETGNIRGSMRVRVPSERMGTRERLYEWISVDKDDMGGPKGRTLPPRTSHDYVKPTSSSSSRKHGSAELSRVSEEGEKSSTSRHTHTKEENTHNRGKQDPFESDATTCKNSFNNPAYYILEGVPNQSAALASDILPGSALPPLANKTTAPPAGSVGKSKPPSGSSAQGRWQTSGRSVRPISEEGSSEDDGNIGPHTGSLNRPPPDFPPPPLPKAALEMSENSFGKPRVFSDLADGKIPPPSKPLVSPGLTPPPGGAPGGGVAFCIESPPVLSPNSAPFRRGGGASALDDQSCSVLQMAKTLSEVEYPSGRERGASQGPTGPQLRGLSFPSHPIQEESIAEDLPEEGGLWGAESSSSSLSVDCSVGEWLQKLGLQHYEEGLLHNGWDDLEFLSDITEEDLEEAGVRDPAHKKILLASLKQQQK.

The region spanning Trp15 to Val111 is the SH2 domain. A compositionally biased stretch (basic and acidic residues) spans Glu114 to Ser123. 2 disordered regions span residues Glu114 to Ala159 and Asp879 to Thr951. Residues Thr136–Ala159 are compositionally biased toward polar residues. Composition is skewed to basic and acidic residues over residues Arg915–Ser924 and Thr931–Pro944. The NPXY motif signature appears at Asn958–Tyr961. Residue Tyr961 is modified to Phosphotyrosine. Disordered stretches follow at residues Pro986–Asp1132 and Glu1147–Ser1174. Over residues Pro994 to Gly1012 the composition is skewed to low complexity. Over residues Arg1045–Pro1056 the composition is skewed to pro residues. The 64-residue stretch at Ser1203–Lys1266 folds into the SAM domain.

Belongs to the inositol 1,4,5-trisphosphate 5-phosphatase family. In terms of processing, tyrosine phosphorylated by the members of the SRC family after exposure to a diverse array of extracellular stimuli.

It localises to the cytoplasm. The protein resides in the cytosol. It is found in the cytoskeleton. The protein localises to the membrane. Its subcellular location is the cell projection. It localises to the filopodium. The protein resides in the lamellipodium. It is found in the nucleus. The protein localises to the nucleus speckle. The catalysed reaction is a 1,2-diacyl-sn-glycero-3-phospho-(1D-myo-inositol-3,4,5-trisphosphate) + H2O = a 1,2-diacyl-sn-glycero-3-phospho-(1D-myo-inositol-3,4-bisphosphate) + phosphate. Functionally, phosphatidylinositol (PtdIns) phosphatase that specifically hydrolyzes the 5-phosphate of phosphatidylinositol-3,4,5-trisphosphate (PtdIns(3,4,5)P3) to produce PtdIns(3,4)P2, thereby negatively regulating the PI3K (phosphoinositide 3-kinase) pathways. Plays a central role in regulation of PI3K-dependent insulin signaling, although the precise molecular mechanisms and signaling pathways remain unclear. Part of a signaling pathway that regulates actin cytoskeleton remodeling. Required for the maintenance and dynamic remodeling of actin structures as well as in endocytosis, having a major impact on ligand-induced EGFR internalization and degradation. Participates in regulation of cortical and submembraneous actin. Regulates cell adhesion and cell spreading. Acts as a negative regulator of the FC-gamma-RIIA receptor (FCGR2A). Mediates signaling from the FC-gamma-RIIB receptor (FCGR2B), playing a central role in terminating signal transduction from activating immune/hematopoietic cell receptor systems. May also hydrolyze PtdIns(1,3,4,5)P4, and could thus affect the levels of the higher inositol polyphosphates like InsP6. The chain is Phosphatidylinositol 3,4,5-trisphosphate 5-phosphatase 2A (inppl1a) from Danio rerio (Zebrafish).